A 433-amino-acid chain; its full sequence is Oxaloacetate decarboxylase beta chain 2 (433 aa).

Transmembrane regions (helical) follow at residues 16-36, 42-62, 122-142, 168-188, 190-210, 216-236, 266-286, 311-331, 340-360, and 413-433; these read LGAGQAIMLLVSLLLLWLAIA, LLLLPIGFGGLLSNIPEAGMA, VLALFYKVAIGSGVAPLVIFM, FGIFATVLGALTLNYFGLIAF, LPQAAAIGIIGGADGPTAIYL, PELLGAIAVAAYSYMALVPLI, ILFPVVLLLLVALLLPDAAPL, NGLINIVTIFLGLSVGAKLVA, LGILLLGVIAFGIGTAAGVLM, and VAGVIGSAIAAGVMLKYVLAM.

This sequence belongs to the GcdB/MmdB/OadB family. In terms of assembly, heterotrimer of an alpha, a beta and a gamma subunit. Na(+) is required as a cofactor.

The protein resides in the cell membrane. The catalysed reaction is oxaloacetate + 2 Na(+)(in) + H(+) = pyruvate + 2 Na(+)(out) + CO2. Catalyzes the decarboxylation of oxaloacetate coupled to Na(+) translocation. The polypeptide is Oxaloacetate decarboxylase beta chain 2 (oadB2) (Salmonella typhi).